Consider the following 216-residue polypeptide: Inactive ribonuclease-like protein 10 (216 aa).

The first 26 residues, M1–G26, serve as a signal peptide directing secretion. A disordered region spans residues E43–T65.

Belongs to the pancreatic ribonuclease family. In terms of processing, the N-terminus is blocked. Glycosylated.

The protein resides in the secreted. Secreted proximal epididymal protein required for post-testicular sperm maturation and male fertility. May be involved in sperm adhesion to the egg zona pellucida. Does not have ribonuclease activity. This Homo sapiens (Human) protein is Inactive ribonuclease-like protein 10 (RNASE10).